The primary structure comprises 87 residues: Large ribosomal subunit protein bL27 (87 aa).

The interval 1–21 (MAHKKAGGSSRNGRDSESKRL) is disordered.

This sequence belongs to the bacterial ribosomal protein bL27 family.

This Paraburkholderia phytofirmans (strain DSM 17436 / LMG 22146 / PsJN) (Burkholderia phytofirmans) protein is Large ribosomal subunit protein bL27.